A 257-amino-acid polypeptide reads, in one-letter code: Flagellar brake protein YcgR 1 (257 aa).

The span at 1 to 18 (MDTTQSNGQTDTQGQLHA) shows a compositional bias: polar residues. The interval 1-30 (MDTTQSNGQTDTQGQLHAQTAEGGNDFGRR) is disordered. Positions 133–246 (QRREYFRVDA…AENTLQRLIT (114 aa)) constitute a PilZ domain.

Belongs to the YcgR family. As to quaternary structure, monomer. Interacts with the flagellar basal bodies.

Its subcellular location is the bacterial flagellum basal body. Functionally, acts as a flagellar brake, regulating swimming and swarming in a bis-(3'-5') cyclic diguanylic acid (c-di-GMP)-dependent manner. Binds 1 c-di-GMP dimer per subunit. Increasing levels of c-di-GMP lead to decreased motility. The sequence is that of Flagellar brake protein YcgR 1 from Paraburkholderia phytofirmans (strain DSM 17436 / LMG 22146 / PsJN) (Burkholderia phytofirmans).